The primary structure comprises 162 residues: ATP-dependent Clp protease adapter protein CLPS1, chloroplastic (162 aa).

Residues 1 to 58 (MAASCLRPAPTASAQMMTRSPVAGLPRPCSALQRSGCTLQGAFGTFAPQTTRTFVVTW) constitute a chloroplast transit peptide.

This sequence belongs to the ClpS family.

Its subcellular location is the plastid. The protein localises to the chloroplast stroma. Its function is as follows. Small adapter protein that modulate the activity of plastid Clp protease system (CLPC). Probably involved in substrate selection for plastid CLPC. This chain is ATP-dependent Clp protease adapter protein CLPS1, chloroplastic, found in Chlamydomonas reinhardtii (Chlamydomonas smithii).